Reading from the N-terminus, the 320-residue chain is MMENLLIPPPPWVGRVDGTSSHHLRWHQAVTPLHDGAEPGACVLIGFSSDEGVERNKGRRGAARGPDALRGALSSMALAEPLRVYDAGTVAVTDNRLEAGQMALGSVVAATLDAGQFPVVLGGGHEVAYGTYLGLAQAAVRTPKRRIGILNLDAHFDLRSDPVPSSGTPFRQILEQEHASGTALQYSVLGISQPSNTTALFDTARGYDVRYLLDDDCSVSDRHRVAVFVSEFLSDVDLVYLTIDLDVLPAAVAPGVSAPAAYGVPAETIQFVCDAVAASGKLAVCDVAELNPSFDIDNRTARTAARLIHRIVTKRIPIAV.

Residues histidine 125, aspartate 153, histidine 155, aspartate 157, aspartate 244, and aspartate 246 each contribute to the Mn(2+) site.

This sequence belongs to the arginase family. Requires Mn(2+) as cofactor.

The enzyme catalyses N-formimidoyl-L-glutamate + H2O = formamide + L-glutamate. It participates in amino-acid degradation; L-histidine degradation into L-glutamate; L-glutamate from N-formimidoyl-L-glutamate (hydrolase route): step 1/1. Its function is as follows. Catalyzes the conversion of N-formimidoyl-L-glutamate to L-glutamate and formamide. The chain is Formimidoylglutamase from Rhodococcus jostii (strain RHA1).